The sequence spans 337 residues: Transaldolase (337 aa).

Positions 1–10 (MSSSPVKRQR) match the Nuclear localization signal motif. At K115 the chain carries N6-acetyllysine. K142 functions as the Schiff-base intermediate with substrate in the catalytic mechanism. The residue at position 219 (K219) is an N6-acetyllysine. 2 positions are modified to phosphoserine: S237 and S256. K269, K286, and K321 each carry N6-acetyllysine.

It belongs to the transaldolase family. Type 1 subfamily. As to quaternary structure, homodimer. Heterodimer with isoform 2. Interacts with KPNA1 and KPNA4.

Its subcellular location is the nucleus. It localises to the cytoplasm. The catalysed reaction is D-sedoheptulose 7-phosphate + D-glyceraldehyde 3-phosphate = D-erythrose 4-phosphate + beta-D-fructose 6-phosphate. Its pathway is carbohydrate degradation; pentose phosphate pathway; D-glyceraldehyde 3-phosphate and beta-D-fructose 6-phosphate from D-ribose 5-phosphate and D-xylulose 5-phosphate (non-oxidative stage): step 2/3. Functionally, catalyzes the rate-limiting step of the non-oxidative phase in the pentose phosphate pathway. Catalyzes the reversible conversion of sedheptulose-7-phosphate and D-glyceraldehyde 3-phosphate into erythrose-4-phosphate and beta-D-fructose 6-phosphate. Not only acts as a pentose phosphate pathway enzyme, but also affects other metabolite pathways by altering its subcellular localization between the nucleus and the cytoplasm. This chain is Transaldolase, found in Homo sapiens (Human).